The primary structure comprises 360 residues: Peptide chain release factor 1 (360 aa).

Residue Gln235 is modified to N5-methylglutamine. A disordered region spans residues 284–303 (RERQSKEAAERKSLVGSGDR).

The protein belongs to the prokaryotic/mitochondrial release factor family. Post-translationally, methylated by PrmC. Methylation increases the termination efficiency of RF1.

It is found in the cytoplasm. Functionally, peptide chain release factor 1 directs the termination of translation in response to the peptide chain termination codons UAG and UAA. This chain is Peptide chain release factor 1, found in Bordetella avium (strain 197N).